The primary structure comprises 134 residues: S-protein homolog 31 (134 aa).

The signal sequence occupies residues 1–21 (MKILSVFLFVFSIYIFGHVSG). N-linked (GlcNAc...) asparagine glycosylation is present at Asn-87.

Belongs to the plant self-incompatibility (S1) protein family.

Its subcellular location is the secreted. The polypeptide is S-protein homolog 31 (Arabidopsis thaliana (Mouse-ear cress)).